The chain runs to 292 residues: Glycine--tRNA ligase alpha subunit (292 aa).

It belongs to the class-II aminoacyl-tRNA synthetase family. In terms of assembly, tetramer of two alpha and two beta subunits.

Its subcellular location is the cytoplasm. The enzyme catalyses tRNA(Gly) + glycine + ATP = glycyl-tRNA(Gly) + AMP + diphosphate. This chain is Glycine--tRNA ligase alpha subunit, found in Buchnera aphidicola subsp. Schizaphis graminum (strain Sg).